Reading from the N-terminus, the 297-residue chain is Large ribosomal subunit protein uL18 (297 aa).

K164 is covalently cross-linked (Glycyl lysine isopeptide (Lys-Gly) (interchain with G-Cter in ubiquitin)). A phosphoserine mark is found at S167, S176, and S235.

The protein belongs to the universal ribosomal protein uL18 family. Component of the large ribosomal subunit (LSU). Mature yeast ribosomes consist of a small (40S) and a large (60S) subunit. The 40S small subunit contains 1 molecule of ribosomal RNA (18S rRNA) and 33 different proteins (encoded by 57 genes). The large 60S subunit contains 3 rRNA molecules (25S, 5.8S and 5S rRNA) and 46 different proteins (encoded by 81 genes). Component of a hexameric 5S RNP precursor complex, composed of 5S RNA, RRS1, RPF2, RPL5, RPL11A/RPL11B and SYO1; this complex acts as a precursor for ribosome assembly. RPL5/uL18 forms a heterotrimeric complex with SYO1 and RPL11A/RPL11B/uL5. Interaction of this complex with KAP104 allows the nuclear import of the heterotrimer.

Its subcellular location is the cytoplasm. It is found in the nucleus. Component of the ribosome, a large ribonucleoprotein complex responsible for the synthesis of proteins in the cell. The small ribosomal subunit (SSU) binds messenger RNAs (mRNAs) and translates the encoded message by selecting cognate aminoacyl-transfer RNA (tRNA) molecules. The large subunit (LSU) contains the ribosomal catalytic site termed the peptidyl transferase center (PTC), which catalyzes the formation of peptide bonds, thereby polymerizing the amino acids delivered by tRNAs into a polypeptide chain. The nascent polypeptides leave the ribosome through a tunnel in the LSU and interact with protein factors that function in enzymatic processing, targeting, and the membrane insertion of nascent chains at the exit of the ribosomal tunnel. In Saccharomyces cerevisiae (strain ATCC 204508 / S288c) (Baker's yeast), this protein is Large ribosomal subunit protein uL18.